A 256-amino-acid polypeptide reads, in one-letter code: Leucine-rich repeat-containing protein 18 (256 aa).

8 LRR repeats span residues G28–L49, E51–F72, N74–M95, S97–N118, N122–K144, E145–P167, K168–V189, and R194–Q215.

Its subcellular location is the cytoplasm. In terms of biological role, may be involved in the regulation of spermatogenesis and sperm maturation. This Rattus norvegicus (Rat) protein is Leucine-rich repeat-containing protein 18 (Lrrc18).